The primary structure comprises 576 residues: Proline--tRNA ligase (576 aa).

This sequence belongs to the class-II aminoacyl-tRNA synthetase family. ProS type 1 subfamily. As to quaternary structure, homodimer.

It is found in the cytoplasm. The enzyme catalyses tRNA(Pro) + L-proline + ATP = L-prolyl-tRNA(Pro) + AMP + diphosphate. Functionally, catalyzes the attachment of proline to tRNA(Pro) in a two-step reaction: proline is first activated by ATP to form Pro-AMP and then transferred to the acceptor end of tRNA(Pro). As ProRS can inadvertently accommodate and process non-cognate amino acids such as alanine and cysteine, to avoid such errors it has two additional distinct editing activities against alanine. One activity is designated as 'pretransfer' editing and involves the tRNA(Pro)-independent hydrolysis of activated Ala-AMP. The other activity is designated 'posttransfer' editing and involves deacylation of mischarged Ala-tRNA(Pro). The misacylated Cys-tRNA(Pro) is not edited by ProRS. This Leptospira interrogans serogroup Icterohaemorrhagiae serovar copenhageni (strain Fiocruz L1-130) protein is Proline--tRNA ligase.